The sequence spans 500 residues: tRNA (guanine(37)-N(1))-methyltransferase (500 aa).

S-adenosyl-L-methionine contacts are provided by residues His215, 253 to 254 (DL), 281 to 282 (DA), and Asn312. Residues 463–500 (QIVAKKTPKPAPRPLPAKNKTTPDTNKMETDLTKLEMK) form a disordered region. The span at 488 to 500 (NKMETDLTKLEMK) shows a compositional bias: basic and acidic residues.

The protein belongs to the class I-like SAM-binding methyltransferase superfamily. TRM5/TYW2 family. Monomer.

It localises to the mitochondrion matrix. Its subcellular location is the nucleus. It is found in the cytoplasm. The enzyme catalyses guanosine(37) in tRNA + S-adenosyl-L-methionine = N(1)-methylguanosine(37) in tRNA + S-adenosyl-L-homocysteine + H(+). Functionally, specifically methylates the N1 position of guanosine-37 in various cytoplasmic and mitochondrial tRNAs. Methylation is not dependent on the nature of the nucleoside 5' of the target nucleoside. This is the first step in the biosynthesis of wybutosine (yW), a modified base adjacent to the anticodon of tRNAs and required for accurate decoding. This Anopheles darlingi (Mosquito) protein is tRNA (guanine(37)-N(1))-methyltransferase.